The primary structure comprises 170 residues: 3-hydroxyacyl-[acyl-carrier-protein] dehydratase FabZ (170 aa).

Histidine 66 is a catalytic residue.

The protein belongs to the thioester dehydratase family. FabZ subfamily.

It is found in the cytoplasm. It catalyses the reaction a (3R)-hydroxyacyl-[ACP] = a (2E)-enoyl-[ACP] + H2O. Functionally, involved in unsaturated fatty acids biosynthesis. Catalyzes the dehydration of short chain beta-hydroxyacyl-ACPs and long chain saturated and unsaturated beta-hydroxyacyl-ACPs. In Granulibacter bethesdensis (strain ATCC BAA-1260 / CGDNIH1), this protein is 3-hydroxyacyl-[acyl-carrier-protein] dehydratase FabZ.